The chain runs to 342 residues: Platelet-activating factor receptor (342 aa).

Residues 1–16 (MEPHDSSHMDSEFRYT) lie on the Extracellular side of the membrane. The helical transmembrane segment at 17 to 38 (LFPIVYSIIFVLGVIANGYVLW) threads the bilayer. Over 39–54 (VFARLYPCKKFNEIKI) the chain is Cytoplasmic. A helical membrane pass occupies residues 55–74 (FMVNLTMADMLFLITLPLWI). Residues 75-91 (VYYQNQGNWILPKFLCN) lie on the Extracellular side of the membrane. Cys-90 and Cys-173 are disulfide-bonded. The helical transmembrane segment at 92-113 (VAGCLFFINTYCSVAFLGVITY) threads the bilayer. The Cytoplasmic portion of the chain corresponds to 114 to 133 (NRFQAVTRPIKTAQANTRKR). The helical transmembrane segment at 134 to 155 (GISLSLVIWVAIVGAASYFLIL) threads the bilayer. Over 156–184 (DSTNTVPDSAGSGNVTRCFEHYEKGSVPV) the chain is Extracellular. Asn-169 carries an N-linked (GlcNAc...) asparagine glycan. The helical transmembrane segment at 185-205 (LIIHIFIVFSFFLVFLIILFC) threads the bilayer. The Cytoplasmic segment spans residues 206 to 233 (NLVIIRTLLMQPVQQQRNAEVKRRALWM). The helical transmembrane segment at 234 to 254 (VCTVLAVFIICFVPHHVVQLP) threads the bilayer. Topologically, residues 255-276 (WTLAELGFQDSKFHQAINDAHQ) are extracellular. The chain crosses the membrane as a helical span at residues 277-296 (VTLCLLSTNCVLDPVIYCFL). Over 297-342 (TKKFRKHLTEKFYSMRSSRKCSRATTDTVTEVVVPFNQIPGNSLKN) the chain is Cytoplasmic.

This sequence belongs to the G-protein coupled receptor 1 family. As to quaternary structure, interacts with ARRB1. As to expression, expressed in the placenta, lung, left and right heart ventricles, heart atrium, leukocytes and differentiated HL-60 granulocytes.

It localises to the cell membrane. In terms of biological role, receptor for platelet activating factor, a chemotactic phospholipid mediator that possesses potent inflammatory, smooth-muscle contractile and hypotensive activity. Seems to mediate its action via a G protein that activates a phosphatidylinositol-calcium second messenger system. The sequence is that of Platelet-activating factor receptor (PTAFR) from Homo sapiens (Human).